A 125-amino-acid polypeptide reads, in one-letter code: MEPAMSLCDLKRATRRKRRVRLKLRSLSSVRLSVFKSNRHFYAQLIDDEKGATLAAASTLEPDVLATAKRRVNSEAARVVARLFAGRLDGLDANYRKFVLDRGSCRYIGVVAAFADELRSLGFEF.

It belongs to the universal ribosomal protein uL18 family. Part of the 50S ribosomal subunit; part of the 5S rRNA/L5/L18/L25 subcomplex. Contacts the 5S and 23S rRNAs.

Functionally, this is one of the proteins that bind and probably mediate the attachment of the 5S RNA into the large ribosomal subunit, where it forms part of the central protuberance. The protein is Large ribosomal subunit protein uL18 of Anaplasma marginale (strain Florida).